A 417-amino-acid polypeptide reads, in one-letter code: Solute carrier family 25 member 46-A (417 aa).

A compositionally biased stretch (basic and acidic residues) spans 1-13; that stretch reads MQPRRPDRFDGLE. The tract at residues 1–90 is disordered; that stretch reads MQPRRPDRFD…AFGEENSNSA (90 aa). Over residues 31–41 the composition is skewed to low complexity; sequence SSFPARSFSSS. One copy of the Solcar 1 repeat lies at 95 to 186; it reads QLNRFAGFGI…GILSEFTHLP (92 aa). Helical transmembrane passes span 102–122, 162–182, 198–218, 257–277, 313–333, and 382–402; these read FGIG…CIVL, MGST…LSEF, IGGH…FYSA, LLPL…HYIV, FPEL…LYPL, and LGFY…AIVL. The Solcar 2 repeat unit spans residues 310 to 415; it reads EDYFPELIAN…KIIYSSVVQT (106 aa).

Belongs to the mitochondrial carrier (TC 2.A.29) family.

The protein resides in the mitochondrion outer membrane. Functionally, may play a role in mitochondrial dynamics by controlling mitochondrial membrane fission. This is Solute carrier family 25 member 46-A (slc25a46-a) from Xenopus laevis (African clawed frog).